The primary structure comprises 84 residues: Large ribosomal subunit protein bL27 (84 aa).

The segment at Met1 to Ser29 is disordered.

It belongs to the bacterial ribosomal protein bL27 family.

This is Large ribosomal subunit protein bL27 from Chlorobium phaeobacteroides (strain BS1).